Reading from the N-terminus, the 417-residue chain is Calreticulin (417 aa).

Residues 1-17 (MLLSVPLLLGLLGLAVA) form the signal peptide. Positions 18 to 197 (EPAVYFKEQF…NSQVESGSLE (180 aa)) are N-domain. Residue Gln-26 participates in Ca(2+) binding. Lys-48 is subject to N6-acetyllysine. Positions 62 and 64 each coordinate Ca(2+). Residue Lys-64 is modified to N6-(2-hydroxyisobutyryl)lysine. Cys-105 and Cys-137 are joined by a disulfide. Tyr-109, Lys-111, Tyr-128, and Asp-135 together coordinate an alpha-D-glucoside. N6-acetyllysine is present on Lys-159. The stretch at 191 to 202 (VESGSLEDDWDF) is one 1-1 repeat. The interval 191–255 (VESGSLEDDW…DAKKPEDWDE (65 aa)) is 4 X approximate repeats. The disordered stretch occupies residues 193 to 278 (SGSLEDDWDF…PEYKGEWKPR (86 aa)). The P-domain stretch occupies residues 198-308 (DDWDFLPPKK…YSPDPSIYAY (111 aa)). Basic and acidic residues predominate over residues 207–251 (KIKDPDASKPEDWDERAKIDDPTDSKPEDWDKPEHIPDPDAKKPE). Position 209 is an N6-acetyllysine (Lys-209). Repeat copies occupy residues 210-221 (DPDASKPEDWDE), 227-238 (DPTDSKPEDWDK), 244-255 (DPDAKKPEDWDE), 259-269 (GEWEPPVIQNP), 273-283 (GEWKPRQIDNP), and 287-297 (GTWIHPEIDNP). Residues 237–270 (DKPEHIPDPDAKKPEDWDEEMDGEWEPPVIQNPE) are interaction with PPIB. Residues 252–261 (DWDEEMDGEW) are compositionally biased toward acidic residues. Residues 259 to 297 (GEWEPPVIQNPEYKGEWKPRQIDNPDYKGTWIHPEIDNP) are 3 X approximate repeats. Positions 309-417 (DNFGVLGLDL…DVPGQAKDEL (109 aa)) are C-domain. Asp-317 contacts an alpha-D-glucoside. Asp-328 contacts Ca(2+). A glycan (N-linked (GlcNAc...) asparagine) is linked at Asn-344. The interval 350-417 (TKAAEKQMKD…DVPGQAKDEL (68 aa)) is disordered. A compositionally biased stretch (basic and acidic residues) spans 352–379 (AAEKQMKDKQDEEQRLKEEEEDKKRKEE). A compositionally biased stretch (acidic residues) spans 380–409 (EEAEDKEDDEDKDEDEEDEEDKEEDEEEDV). The Prevents secretion from ER signature appears at 414–417 (KDEL).

This sequence belongs to the calreticulin family. As to quaternary structure, monomer. Component of an EIF2 complex at least composed of CELF1/CUGBP1, CALR, CALR3, EIF2S1, EIF2S2, HSP90B1 and HSPA5. Interacts with PDIA3/ERp57 and SPACA9. Interacts with TRIM21. Interacts with NR3C1. Interacts with PPIB. Interacts (via P-domain) with PDIA5. Interacts with GABARAP. Interacts with HLA-E-B2M and HLA-G-B2M complexes. Interacts with HLA-F. Interacts with CLCC1.

Its subcellular location is the endoplasmic reticulum lumen. The protein resides in the cytoplasm. It localises to the cytosol. The protein localises to the secreted. It is found in the extracellular space. Its subcellular location is the extracellular matrix. The protein resides in the cell surface. It localises to the sarcoplasmic reticulum lumen. The protein localises to the cytoplasmic vesicle. It is found in the secretory vesicle. Its subcellular location is the cortical granule. The protein resides in the cytolytic granule. In terms of biological role, calcium-binding chaperone that promotes folding, oligomeric assembly and quality control in the endoplasmic reticulum (ER) via the calreticulin/calnexin cycle. This lectin interacts transiently with almost all of the monoglucosylated glycoproteins that are synthesized in the ER. Interacts with the DNA-binding domain of NR3C1 and mediates its nuclear export. Involved in maternal gene expression regulation. May participate in oocyte maturation via the regulation of calcium homeostasis. Present in the cortical granules of non-activated oocytes, is exocytosed during the cortical reaction in response to oocyte activation and might participate in the block to polyspermy. This is Calreticulin from Homo sapiens (Human).